Here is a 300-residue protein sequence, read N- to C-terminus: Solute carrier family 25 member 35 (300 aa).

Solcar repeat units lie at residues 1 to 90 (MDFL…AEAG), 100 to 193 (HSPA…TKDL), and 203 to 294 (QSWK…LRSL). A run of 6 helical transmembrane segments spans residues 38 to 58 (TYQR…KVDG), 59 to 79 (LAAL…MNGI), 91 to 119 (GYLH…GAYL), 169 to 190 (ALGG…FSST), 205 to 225 (WKLA…AMAP), and 277 to 300 (LGPH…TDTK).

Belongs to the mitochondrial carrier (TC 2.A.29) family.

It localises to the mitochondrion inner membrane. It carries out the reaction a dicarboxylate(in) + sulfate(out) = a dicarboxylate(out) + sulfate(in). Putative antiporter that exchanges dicarboxylates and sulfur oxoanions across the inner membrane of mitochondria. This is Solute carrier family 25 member 35 (SLC25A35) from Homo sapiens (Human).